Consider the following 250-residue polypeptide: Electron transfer flavoprotein subunit beta (250 aa).

The protein belongs to the ETF beta-subunit/FixA family. As to quaternary structure, heterodimer of an alpha and a beta subunit. It depends on FAD as a cofactor. AMP serves as cofactor.

The protein localises to the mitochondrion matrix. The electron transfer flavoprotein serves as a specific electron acceptor for several dehydrogenases, including five acyl-CoA dehydrogenases, glutaryl-CoA and sarcosine dehydrogenase. It transfers the electrons to the main mitochondrial respiratory chain via ETF-ubiquinone oxidoreductase (ETF dehydrogenase). The chain is Electron transfer flavoprotein subunit beta (etfb) from Dictyostelium discoideum (Social amoeba).